The following is a 601-amino-acid chain: Glutathione-regulated potassium-efflux system protein KefB (601 aa).

13 helical membrane passes run alanine 4–alanine 24, isoleucine 29–phenylalanine 49, glutamate 55–leucine 75, isoleucine 87–methionine 107, phenylalanine 111–alanine 131, valine 152–glycine 172, histidine 177–glycine 197, phenylalanine 207–serine 227, leucine 230–leucine 250, alanine 262–leucine 282, leucine 284–isoleucine 304, methionine 324–alanine 344, and alanine 356–isoleucine 376. Residues lysine 400–threonine 519 enclose the RCK N-terminal domain.

This sequence belongs to the monovalent cation:proton antiporter 2 (CPA2) transporter (TC 2.A.37) family. KefB subfamily. Interacts with the regulatory subunit KefG.

It is found in the cell inner membrane. In terms of biological role, pore-forming subunit of a potassium efflux system that confers protection against electrophiles. Catalyzes K(+)/H(+) antiport. The sequence is that of Glutathione-regulated potassium-efflux system protein KefB from Salmonella paratyphi A (strain ATCC 9150 / SARB42).